Here is a 317-residue protein sequence, read N- to C-terminus: Cytochrome c biogenesis protein CcsA (317 aa).

The next 7 membrane-spanning stretches (helical) occupy residues 13–35 (ISFS…HEIV), 44–64 (GMIA…IYSG), 71–91 (LYES…VPYF), 143–163 (MLLS…LLVI), 171–191 (MIGF…IKYL), 225–245 (VIGL…VWAN), and 286–306 (AIVA…VNLL).

This sequence belongs to the CcmF/CycK/Ccl1/NrfE/CcsA family. In terms of assembly, may interact with Ccs1.

It localises to the plastid. The protein resides in the chloroplast thylakoid membrane. In terms of biological role, required during biogenesis of c-type cytochromes (cytochrome c6 and cytochrome f) at the step of heme attachment. This is Cytochrome c biogenesis protein CcsA from Illicium oligandrum (Star anise).